We begin with the raw amino-acid sequence, 244 residues long: Phosphoadenosine 5'-phosphosulfate reductase (244 aa).

Cys-239 serves as the catalytic Nucleophile; cysteine thiosulfonate intermediate.

Belongs to the PAPS reductase family. CysH subfamily.

Its subcellular location is the cytoplasm. The enzyme catalyses [thioredoxin]-disulfide + sulfite + adenosine 3',5'-bisphosphate + 2 H(+) = [thioredoxin]-dithiol + 3'-phosphoadenylyl sulfate. It participates in sulfur metabolism; hydrogen sulfide biosynthesis; sulfite from sulfate: step 3/3. Its function is as follows. Catalyzes the formation of sulfite from phosphoadenosine 5'-phosphosulfate (PAPS) using thioredoxin as an electron donor. The protein is Phosphoadenosine 5'-phosphosulfate reductase of Enterobacter sp. (strain 638).